The following is a 97-amino-acid chain: Large ribosomal subunit protein bL27 (97 aa).

Positions 1–12 are excised as a propeptide; it reads MLKMNLANLQLF. Residues 14-37 form a disordered region; that stretch reads HKKGGGSTSNGRDSQAKRLGAKAA.

The protein belongs to the bacterial ribosomal protein bL27 family. Post-translationally, the N-terminus is cleaved by ribosomal processing cysteine protease Prp.

The sequence is that of Large ribosomal subunit protein bL27 from Streptococcus uberis (strain ATCC BAA-854 / 0140J).